The primary structure comprises 404 residues: Histidine--tRNA ligase (404 aa).

The protein belongs to the class-II aminoacyl-tRNA synthetase family.

Its subcellular location is the cytoplasm. The enzyme catalyses tRNA(His) + L-histidine + ATP = L-histidyl-tRNA(His) + AMP + diphosphate + H(+). This is Histidine--tRNA ligase from Nanoarchaeum equitans (strain Kin4-M).